We begin with the raw amino-acid sequence, 485 residues long: Probable cobyric acid synthase (485 aa).

Residues 250–435 (EIEIAVIRLP…LHGLFDNKNI (186 aa)) form the GATase cobBQ-type domain. Cys328 functions as the Nucleophile in the catalytic mechanism. Residue His427 is part of the active site.

The protein belongs to the CobB/CobQ family. CobQ subfamily.

It participates in cofactor biosynthesis; adenosylcobalamin biosynthesis. Its function is as follows. Catalyzes amidations at positions B, D, E, and G on adenosylcobyrinic A,C-diamide. NH(2) groups are provided by glutamine, and one molecule of ATP is hydrogenolyzed for each amidation. The chain is Probable cobyric acid synthase from Methanosarcina barkeri (strain Fusaro / DSM 804).